The following is a 294-amino-acid chain: Oligopeptide transport system permease protein OppC (294 aa).

The next 6 helical transmembrane spans lie at 27 to 47, 94 to 114, 127 to 147, 151 to 171, 202 to 224, and 260 to 280; these read MIST…SMFL, IAFA…VITG, FTDF…VTII, NSWS…TRLI, IWPN…NIGL, and WTWV…IFIG. One can recognise an ABC transmembrane type-1 domain in the interval 88–280; sequence ARNSFNIAFA…IVVLAIIFIG (193 aa).

The protein belongs to the binding-protein-dependent transport system permease family. OppBC subfamily. The complex is composed of two ATP-binding proteins (OppD and OppF), two transmembrane proteins (OppB and OppC) and a solute-binding protein (OppA).

The protein localises to the cell membrane. Functionally, part of the ABC transporter complex OppABCDF involved in the uptake of oligopeptides. Probably responsible for the translocation of the substrate across the membrane. Essential for uptake of peptides larger than three amino acids and for growth in milk. The polypeptide is Oligopeptide transport system permease protein OppC (oppC) (Lactococcus lactis subsp. lactis (strain IL1403) (Streptococcus lactis)).